The chain runs to 393 residues: NAD(P)H-quinone oxidoreductase subunit H, chloroplastic (393 aa).

Belongs to the complex I 49 kDa subunit family. NDH is composed of at least 16 different subunits, 5 of which are encoded in the nucleus.

It localises to the plastid. Its subcellular location is the chloroplast thylakoid membrane. It catalyses the reaction a plastoquinone + NADH + (n+1) H(+)(in) = a plastoquinol + NAD(+) + n H(+)(out). The catalysed reaction is a plastoquinone + NADPH + (n+1) H(+)(in) = a plastoquinol + NADP(+) + n H(+)(out). In terms of biological role, NDH shuttles electrons from NAD(P)H:plastoquinone, via FMN and iron-sulfur (Fe-S) centers, to quinones in the photosynthetic chain and possibly in a chloroplast respiratory chain. The immediate electron acceptor for the enzyme in this species is believed to be plastoquinone. Couples the redox reaction to proton translocation, and thus conserves the redox energy in a proton gradient. The sequence is that of NAD(P)H-quinone oxidoreductase subunit H, chloroplastic from Draba nemorosa (Woodland whitlowgrass).